A 100-amino-acid polypeptide reads, in one-letter code: MGSRFLLALFLVLLVLGCEVQAAQQLQQDDPGSPALLDKVQESISSYWDTAKAAAQGLYQKTYLTSVDEKLRDMYSKSSAAMTTYASIFTDQIFTLLKGE.

Residues 1–22 (MGSRFLLALFLVLLVLGCEVQA) form the signal peptide. The segment at 66–74 (SVDEKLRDM) is lipid binding. The lipoprotein lipase cofactor stretch occupies residues 78 to 100 (SSAAMTTYASIFTDQIFTLLKGE).

Belongs to the apolipoprotein C2 family. In terms of processing, proapolipoprotein C-II is synthesized as a sialic acid containing glycoprotein which is subsequently desialylated prior to its proteolytic processing. Post-translationally, proapolipoprotein C-II, the major form found in plasma undergoes proteolytic cleavage of its N-terminal hexapeptide to generate the mature form apolipoprotein C-II, which occurs as the minor form in plasma.

The protein localises to the secreted. In terms of biological role, component of chylomicrons, very low-density lipoproteins (VLDL), low-density lipoproteins (LDL), and high-density lipoproteins (HDL) in plasma. Plays an important role in lipoprotein metabolism as an activator of lipoprotein lipase. The protein is Apolipoprotein C-II (APOC2) of Bramus lutescens (Transcaucasian mole vole).